The primary structure comprises 159 residues: NADH-quinone oxidoreductase subunit I (159 aa).

4Fe-4S ferredoxin-type domains follow at residues 50-80 (QRRY…IESE) and 90-119 (KRYD…ETHI). 8 residues coordinate [4Fe-4S] cluster: C60, C63, C66, C70, C99, C102, C105, and C109.

The protein belongs to the complex I 23 kDa subunit family. NDH-1 is composed of 14 different subunits. Subunits NuoA, H, J, K, L, M, N constitute the membrane sector of the complex. [4Fe-4S] cluster is required as a cofactor.

It localises to the cell inner membrane. The enzyme catalyses a quinone + NADH + 5 H(+)(in) = a quinol + NAD(+) + 4 H(+)(out). In terms of biological role, NDH-1 shuttles electrons from NADH, via FMN and iron-sulfur (Fe-S) centers, to quinones in the respiratory chain. The immediate electron acceptor for the enzyme in this species is believed to be ubiquinone. Couples the redox reaction to proton translocation (for every two electrons transferred, four hydrogen ions are translocated across the cytoplasmic membrane), and thus conserves the redox energy in a proton gradient. The sequence is that of NADH-quinone oxidoreductase subunit I from Neisseria meningitidis serogroup A / serotype 4A (strain DSM 15465 / Z2491).